The primary structure comprises 534 residues: Monolignol oxidoreductase AtBBE-like 13 (534 aa).

Positions 1–29 (MAFVLMNNTNAFLVTLLLLSLSYIPLSFS) are cleaved as a signal peptide. Asparagine 7 and asparagine 59 each carry an N-linked (GlcNAc...) asparagine glycan. Cysteine 38 and cysteine 102 form a disulfide bridge. A cross-link (6-(S-cysteinyl)-8alpha-(pros-histidyl)-FAD (His-Cys)) is located at residues 117-181 (HDYEGLSYVS…KIHGFPAGLC (65 aa)).

It belongs to the oxygen-dependent FAD-linked oxidoreductase family. The cofactor is FAD. Post-translationally, the FAD cofactor is bound via a bicovalent 6-S-cysteinyl, 8alpha-N1-histidyl FAD linkage.

It is found in the secreted. The protein localises to the cell wall. It catalyses the reaction (E)-4-coumaroyl alcohol + A = (E)-4-coumaraldehyde + AH2. The catalysed reaction is (E)-coniferol + A = (E)-coniferaldehyde + AH2. The enzyme catalyses (E)-sinapyl alcohol + A = (E)-sinapaldehyde + AH2. It participates in phenylpropanoid metabolism. Mediates oxidation of p-hydroxylated derivatives of cinnamyl alcohol (i.e. the monolignols p-coumaryl-, coniferyl-, and sinapyl alcohol) to their corresponding aldehydes. The electron acceptor required for these reactions is not known, but does not seem to be dioxygen. Is much less efficient towards cinnamyl alcohol. The chain is Monolignol oxidoreductase AtBBE-like 13 from Arabidopsis thaliana (Mouse-ear cress).